Reading from the N-terminus, the 112-residue chain is Putative pterin-4-alpha-carbinolamine dehydratase (112 aa).

Belongs to the pterin-4-alpha-carbinolamine dehydratase family.

It catalyses the reaction (4aS,6R)-4a-hydroxy-L-erythro-5,6,7,8-tetrahydrobiopterin = (6R)-L-erythro-6,7-dihydrobiopterin + H2O. This Shewanella frigidimarina (strain NCIMB 400) protein is Putative pterin-4-alpha-carbinolamine dehydratase.